The following is a 250-amino-acid chain: Ditrans,polycis-undecaprenyl-diphosphate synthase ((2E,6E)-farnesyl-diphosphate specific) (250 aa).

The active site involves Asp-20. Asp-20 is a binding site for Mg(2+). Substrate is bound by residues 21-24, Trp-25, Arg-33, His-37, and 65-67; these read GNGR and SSE. Residue Asn-68 is the Proton acceptor of the active site. Residues Trp-69, Arg-71, Arg-188, and 194–196 each bind substrate; that span reads RIS. Glu-207 lines the Mg(2+) pocket.

It belongs to the UPP synthase family. As to quaternary structure, homodimer. Mg(2+) is required as a cofactor.

The catalysed reaction is 8 isopentenyl diphosphate + (2E,6E)-farnesyl diphosphate = di-trans,octa-cis-undecaprenyl diphosphate + 8 diphosphate. In terms of biological role, catalyzes the sequential condensation of isopentenyl diphosphate (IPP) with (2E,6E)-farnesyl diphosphate (E,E-FPP) to yield (2Z,6Z,10Z,14Z,18Z,22Z,26Z,30Z,34E,38E)-undecaprenyl diphosphate (di-trans,octa-cis-UPP). UPP is the precursor of glycosyl carrier lipid in the biosynthesis of bacterial cell wall polysaccharide components such as peptidoglycan and lipopolysaccharide. The chain is Ditrans,polycis-undecaprenyl-diphosphate synthase ((2E,6E)-farnesyl-diphosphate specific) from Vibrio cholerae serotype O1 (strain ATCC 39315 / El Tor Inaba N16961).